Reading from the N-terminus, the 405-residue chain is uncharacterized protein (405 aa).

12 helical membrane-spanning segments follow: residues 19–39 (IVSI…PLAV), 47–67 (VMGF…FATL), 85–105 (IVVF…TAGL), 107–127 (ASLP…LGIG), 156–176 (GIVT…FYHW), 178–198 (GLQA…LLAI), 224–244 (GMAL…ITLF), 252–272 (GAAF…LLFP), 283–303 (VAMI…VATM), 309–329 (IGVL…GVVA), 344–364 (TYTV…GLVM), and 366–386 (WAGV…ALLL).

The protein belongs to the major facilitator superfamily. YhhS family.

It is found in the cell inner membrane. This is an uncharacterized protein from Escherichia coli O6:H1 (strain CFT073 / ATCC 700928 / UPEC).